Here is a 1014-residue protein sequence, read N- to C-terminus: MFKAVNPRQNFPQMEEDILKLWQDKGVFKKSIENRRDGKRFTLYEGPPTANGRPGIHHVLSRVFKDVIPRYKVMKGYYAPRIGGWDTHGLPVELEVEKELGFTSKNDIEKYGIAEFNARCRSSVFKYVSEWNKLTERIAYWVDLDNAYITMDNNYIESGWWALKQMWDKGLVYQGHRVTPHCPRCGTSLSSHEVAQGYKDNTEDPSVFVKFEIAKESLAKAGLAKKWAYPADKPLYLLAWTTTPWTLPANTALAVSAADQYAILDMTDYYMILAKPRLSALKLAENPVAGECLGSDLSGLFYKPLFDPREFGIPVRNMQDNSETGVSEELLYPVITTSYVSMDDGTGIVHTAPAYGELDYESGVKYGLKFVHHVDLQGRITGSYPFAGKFVKEADKDISRNLKERGLMFRNERMHHTYPFCWRCDSPLIYYAKQSWYIRTTAVRDELIKGNQQINWYPEHIKDGRFGDWLENNIDWAFSRERYWGTPVPIWRCEKCGRTECVGGIDELKAKPNFKGMQEKLDIHRPYVDEWTYDCDKCGGNMKRVTEVMDCWYDSGAMPVAQYHYPFEPESRSIAKDGRFPADYICEAVDQTRGWFYSLHAISTLIFNRPCYQNVICLGHILDERGEKMSKSRNNVIQPATVLDKYGADAVRWYFYTAAPPGNARRFSEKLVGEVTRQFLLMLWNVYSFFVTYANIDSFTPSEKYLEGEVPELDRWILSELNQLVLDVDKGLDNYDPTQAGRRIEDFVGYLSNWYVRRSRRRFWKSENDADKLSAYQALYTCLVTLSRLLAPFTPFVAEELYQNLVLSADPSALESVHLTDFPVADTALIDEQLDNEIRLVMKVSSMGRSARSKAALKVRQPLAEVRVVLASAGERTGLMRLAEQVLEELNVKALAVEEPGTVIPEKNYAASTEGAYTVAVYTGLSPELLAEGTAREIVHRLQTMRKSAGFEIADYINTHYQADEYLDSVIRMHSEYIKKETLSNQLIKGNAPEGAYAESLDIDGHSLSLWVAR.

A 'HIGH' region motif is present at residues 48–58 (PTANGRPGIHH). Positions 628–632 (KMSKS) match the 'KMSKS' region motif. Residue lysine 631 coordinates ATP.

It belongs to the class-I aminoacyl-tRNA synthetase family. IleS type 2 subfamily. Monomer. It depends on Zn(2+) as a cofactor.

The protein localises to the cytoplasm. It catalyses the reaction tRNA(Ile) + L-isoleucine + ATP = L-isoleucyl-tRNA(Ile) + AMP + diphosphate. Its function is as follows. Catalyzes the attachment of isoleucine to tRNA(Ile). As IleRS can inadvertently accommodate and process structurally similar amino acids such as valine, to avoid such errors it has two additional distinct tRNA(Ile)-dependent editing activities. One activity is designated as 'pretransfer' editing and involves the hydrolysis of activated Val-AMP. The other activity is designated 'posttransfer' editing and involves deacylation of mischarged Val-tRNA(Ile). This is Isoleucine--tRNA ligase from Dehalococcoides mccartyi (strain ATCC BAA-2266 / KCTC 15142 / 195) (Dehalococcoides ethenogenes (strain 195)).